The sequence spans 830 residues: Leucine--tRNA ligase (830 aa).

The 'HIGH' region motif lies at 42 to 52 (PYPSGNLHMGH). The short motif at 585–589 (KMSKS) is the 'KMSKS' region element. K588 provides a ligand contact to ATP.

Belongs to the class-I aminoacyl-tRNA synthetase family.

The protein resides in the cytoplasm. It carries out the reaction tRNA(Leu) + L-leucine + ATP = L-leucyl-tRNA(Leu) + AMP + diphosphate. This chain is Leucine--tRNA ligase, found in Halothermothrix orenii (strain H 168 / OCM 544 / DSM 9562).